Consider the following 313-residue polypeptide: Solute carrier family 35 member E3 (313 aa).

The next 9 helical transmembrane spans lie at 17 to 37, 40 to 60, 71 to 91, 126 to 146, 154 to 174, 187 to 206, 225 to 245, 252 to 272, and 275 to 295; these read GLLF…WIYV, GFPN…GLYI, SLPL…VVFT, FSVR…LNSY, LGMV…VWVG, LLYY…VPFF, LMVL…YWII, TYNM…YILF, and PLSV…LTYT.

This sequence belongs to the TPT transporter family. SLC35E subfamily.

It is found in the membrane. Functionally, putative transporter. This chain is Solute carrier family 35 member E3 (Slc35e3), found in Mus musculus (Mouse).